The following is a 543-amino-acid chain: Probable ubiquitin-conjugating enzyme E2 26 (543 aa).

A disordered region spans residues 1 to 21 (MEPDVVEIPPPPLIASGSRTR). The UBC core domain maps to 271–431 (NWVKKVQADW…VFLLSLKTMV (161 aa)). C357 functions as the Glycyl thioester intermediate in the catalytic mechanism. A disordered region spans residues 514-543 (LAEKPEPPMSNANTENQSKKKTRKRSRSSR). Residues 532–543 (KKKTRKRSRSSR) show a composition bias toward basic residues.

It belongs to the ubiquitin-conjugating enzyme family.

The catalysed reaction is S-ubiquitinyl-[E1 ubiquitin-activating enzyme]-L-cysteine + [E2 ubiquitin-conjugating enzyme]-L-cysteine = [E1 ubiquitin-activating enzyme]-L-cysteine + S-ubiquitinyl-[E2 ubiquitin-conjugating enzyme]-L-cysteine.. It participates in protein modification; protein ubiquitination. Functionally, accepts the ubiquitin from the E1 complex and catalyzes its covalent attachment to other proteins. The protein is Probable ubiquitin-conjugating enzyme E2 26 (UBC26) of Arabidopsis thaliana (Mouse-ear cress).